We begin with the raw amino-acid sequence, 406 residues long: Succinylornithine transaminase (406 aa).

Lys252 bears the N6-(pyridoxal phosphate)lysine mark.

This sequence belongs to the class-III pyridoxal-phosphate-dependent aminotransferase family. AstC subfamily. Pyridoxal 5'-phosphate is required as a cofactor.

It carries out the reaction N(2)-succinyl-L-ornithine + 2-oxoglutarate = N-succinyl-L-glutamate 5-semialdehyde + L-glutamate. It functions in the pathway amino-acid degradation; L-arginine degradation via AST pathway; L-glutamate and succinate from L-arginine: step 3/5. Its function is as follows. Catalyzes the transamination of N(2)-succinylornithine and alpha-ketoglutarate into N(2)-succinylglutamate semialdehyde and glutamate. Can also act as an acetylornithine aminotransferase. This is Succinylornithine transaminase from Escherichia coli (strain SMS-3-5 / SECEC).